The chain runs to 484 residues: Poly(A) RNA polymerase GLD2 (484 aa).

2 positions are modified to phosphoserine: serine 62 and serine 69. The Nuclear localization signal motif lies at 76 to 92 (KRLSDEKNLPLDGKRQR). At serine 95 the chain carries Phosphoserine. 2 residues coordinate Mg(2+): aspartate 213 and aspartate 215. Residues 386 to 440 (NLGDLLLGFLKYYATEFDWNSQMISVREAKAIPRPDGIEWRNKYICVEEPFDGTN) form the PAP-associated domain.

The protein belongs to the DNA polymerase type-B-like family. GLD2 subfamily. Interacts with CPEB1, CPEB2, CPSF1 and PABPC1. Interacts with QKI isoform QKI7; promoting recruitment to miRNA miR-122 and miR-122 stabilization. It depends on Mg(2+) as a cofactor. Mn(2+) is required as a cofactor.

The protein resides in the cytoplasm. It is found in the nucleus. It carries out the reaction RNA(n) + ATP = RNA(n)-3'-adenine ribonucleotide + diphosphate. Its function is as follows. Cytoplasmic poly(A) RNA polymerase that adds successive AMP monomers to the 3'-end of specific RNAs, forming a poly(A) tail. In contrast to the canonical nuclear poly(A) RNA polymerase, it only adds poly(A) to selected cytoplasmic mRNAs. Does not play a role in replication-dependent histone mRNA degradation. Adds a single nucleotide to the 3' end of specific miRNAs, monoadenylation stabilizes and prolongs the activity of some but not all miRNAs. This is Poly(A) RNA polymerase GLD2 from Bos taurus (Bovine).